A 147-amino-acid chain; its full sequence is UPF0306 protein YhbP (147 aa).

The protein belongs to the UPF0306 family.

The chain is UPF0306 protein YhbP from Salmonella paratyphi A (strain AKU_12601).